Here is a 345-residue protein sequence, read N- to C-terminus: MRLSDFDFALPEGLVAQAPVTPRDASRLMVLAPEEGSPAHRGFADLPELLAPGDLLVFNDTRVIPARLLGHKASGGKVELLLCEPLEGGLGRRWRAMGQASKPIREGAVLTFDGLEARVDDVEGEGFYRVTLDRQGPELEAALGRAGRIPLPPYIRRAPDAEDAARYQTIWARAPGSAAAPTAGLHFTEPLLARLAARGIRRTAVTLHVGPGTFLPIRGDDLDLHRMHGERYEVSPAAAAELAATRARGGRIVAVGTTSVRTLESAWRDGAVAAGPGRTELFIRPGHPFHAVDAMVTNFHLPRSTLLVLVCAFGGQGRVLAAYREAVARGYRFFSYGDAMLLLRR.

It belongs to the QueA family. As to quaternary structure, monomer.

Its subcellular location is the cytoplasm. The catalysed reaction is 7-aminomethyl-7-carbaguanosine(34) in tRNA + S-adenosyl-L-methionine = epoxyqueuosine(34) in tRNA + adenine + L-methionine + 2 H(+). Its pathway is tRNA modification; tRNA-queuosine biosynthesis. In terms of biological role, transfers and isomerizes the ribose moiety from AdoMet to the 7-aminomethyl group of 7-deazaguanine (preQ1-tRNA) to give epoxyqueuosine (oQ-tRNA). The protein is S-adenosylmethionine:tRNA ribosyltransferase-isomerase of Anaeromyxobacter dehalogenans (strain 2CP-1 / ATCC BAA-258).